Consider the following 116-residue polypeptide: Hydrogenase maturation factor HypA (116 aa).

Histidine 2 is a Ni(2+) binding site. The Zn(2+) site is built by cysteine 73, cysteine 76, cysteine 90, and cysteine 93.

It belongs to the HypA/HybF family.

Its function is as follows. Involved in the maturation of [NiFe] hydrogenases. Required for nickel insertion into the metal center of the hydrogenase. The sequence is that of Hydrogenase maturation factor HypA from Escherichia coli O6:H1 (strain CFT073 / ATCC 700928 / UPEC).